Reading from the N-terminus, the 558-residue chain is uncharacterized protein (558 aa).

A disordered region spans residues 396–420 (SSITDNDTDNDSGATESQQTDSEND). Positions 407–416 (SGATESQQTD) are enriched in polar residues.

This sequence belongs to the chlamydial CPn_0065/CT_288/TC_0561 family.

This is an uncharacterized protein from Chlamydia muridarum (strain MoPn / Nigg).